The following is a 182-amino-acid chain: Spermatophorin SP23 (182 aa).

The signal sequence occupies residues 1 to 7 (MVASIAG). Disordered regions lie at residues 1-26 (MVASIAGEEEPAAEKSQQSPDHFQPY), 56-79 (FQTIAKPNEGPTDQPEANSANSIE), and 104-136 (IVVNQAPPPPPVIYQAPPPPPPPPIFQQAPPTI). Residues 109-128 (APPPPPVIYQAPPPPPPPPI) show a composition bias toward pro residues.

Spermatophore.

It is found in the secreted. Functionally, structural protein of a layer within the wall of the spermatophore produced probably by cell type 4 of the bean-shaped gland (BAG). Fixation in the spermatophore seems to require covalent cross-linking of spermatophorins. The sequence is that of Spermatophorin SP23 (SP23) from Tenebrio molitor (Yellow mealworm beetle).